The sequence spans 250 residues: Flavin-dependent thymidylate synthase (250 aa).

Residues 7–233 (LRVQLIAKTD…PAVFADFEIA (227 aa)) form the ThyX domain. FAD-binding positions include Ser71, 95–97 (RHR), and Gln103. DUMP is bound by residues 92 to 95 (ELIR), 103 to 107 (QLSQR), and Arg172. The ThyX motif motif lies at 95-105 (RHRHFSYSQLS). FAD-binding positions include 188–190 (NYR) and His194. Residue Arg199 coordinates dUMP. Arg199 (involved in ionization of N3 of dUMP, leading to its activation) is an active-site residue.

The protein belongs to the thymidylate synthase ThyX family. As to quaternary structure, homotetramer. The cofactor is FAD.

The catalysed reaction is dUMP + (6R)-5,10-methylene-5,6,7,8-tetrahydrofolate + NADPH + H(+) = dTMP + (6S)-5,6,7,8-tetrahydrofolate + NADP(+). It participates in pyrimidine metabolism; dTTP biosynthesis. In terms of biological role, catalyzes the reductive methylation of 2'-deoxyuridine-5'-monophosphate (dUMP) to 2'-deoxythymidine-5'-monophosphate (dTMP) while utilizing 5,10-methylenetetrahydrofolate (mTHF) as the methyl donor, and NADPH and FADH(2) as the reductant. The polypeptide is Flavin-dependent thymidylate synthase (Mycobacterium avium (strain 104)).